A 158-amino-acid chain; its full sequence is Cyclic pyranopterin monophosphate synthase (158 aa).

Substrate contacts are provided by residues 76-78 and 114-115; these read MCH and ME. The active site involves Asp129.

The protein belongs to the MoaC family. As to quaternary structure, homohexamer; trimer of dimers.

The enzyme catalyses (8S)-3',8-cyclo-7,8-dihydroguanosine 5'-triphosphate = cyclic pyranopterin phosphate + diphosphate. It functions in the pathway cofactor biosynthesis; molybdopterin biosynthesis. Catalyzes the conversion of (8S)-3',8-cyclo-7,8-dihydroguanosine 5'-triphosphate to cyclic pyranopterin monophosphate (cPMP). The polypeptide is Cyclic pyranopterin monophosphate synthase (Clostridium perfringens (strain SM101 / Type A)).